The following is a 350-amino-acid chain: N-acetyllactosaminide beta-1,3-N-acetylglucosaminyltransferase 4 (350 aa).

The Cytoplasmic portion of the chain corresponds to 1-4 (MLPR). A helical; Signal-anchor for type II membrane protein transmembrane segment spans residues 5–25 (LGCVLFCSLVVLLLSCLLLLK). Residues 26-350 (ERIPAGSSKA…RLKCAATHKP (325 aa)) are Lumenal-facing. 2 N-linked (GlcNAc...) asparagine glycosylation sites follow: N53 and N166.

The protein belongs to the glycosyltransferase 31 family.

It localises to the golgi apparatus membrane. The enzyme catalyses a beta-D-galactosyl-(1-&gt;4)-N-acetyl-beta-D-glucosaminyl derivative + UDP-N-acetyl-alpha-D-glucosamine = an N-acetyl-beta-D-glucosaminyl-(1-&gt;3)-beta-D-galactosyl-(1-&gt;4)-N-acetyl-beta-D-glucosaminyl derivative + UDP + H(+). Its pathway is protein modification; protein glycosylation. In terms of biological role, beta-1,3-N-acetylglucosaminyltransferase involved in the synthesis of poly-N-acetyllactosamine. Has activity for type 2 oligosaccharides. The chain is N-acetyllactosaminide beta-1,3-N-acetylglucosaminyltransferase 4 (B3gnt4) from Mus musculus (Mouse).